Reading from the N-terminus, the 131-residue chain is Translation initiation factor 5A (131 aa).

K36 carries the hypusine modification.

It belongs to the eIF-5A family.

Its subcellular location is the cytoplasm. Functions by promoting the formation of the first peptide bond. This Saccharolobus islandicus (strain Y.N.15.51 / Yellowstone #2) (Sulfolobus islandicus) protein is Translation initiation factor 5A (eIF5A).